The sequence spans 518 residues: Arginyl-tRNA--protein transferase 1 (518 aa).

Residue Ser-169 is modified to Phosphoserine. The segment at 175 to 203 (EKLGSGEPSHSVKVHTVPKPGKGADLSKP) is disordered.

It belongs to the R-transferase family. Monomer. Interacts with LIAT1; LIAT1 is not a substrate of ATE1, the interaction takes place in the cytoplasm and seems to increase ATE1 arginyltransferase activity.

It localises to the nucleus. The protein resides in the cytoplasm. It carries out the reaction an N-terminal L-alpha-aminoacyl-[protein] + L-arginyl-tRNA(Arg) = an N-terminal L-arginyl-L-aminoacyl-[protein] + tRNA(Arg) + H(+). Its function is as follows. Involved in the post-translational conjugation of arginine to the N-terminal aspartate or glutamate of a protein. This arginylation is required for degradation of the protein via the ubiquitin pathway. Does not arginylate cysteine residues. The chain is Arginyl-tRNA--protein transferase 1 from Homo sapiens (Human).